A 738-amino-acid chain; its full sequence is Catalase-peroxidase (738 aa).

The signal sequence occupies residues 1–24 (MEPLFPKRLLSIAVLCVASATAQA). A cross-link (tryptophyl-tyrosyl-methioninium (Trp-Tyr) (with M-252)) is located at residues 104–226 (WHAAGTYRMI…FGATEMGLIY (123 aa)). His105 acts as the Proton acceptor in catalysis. Residues 191–213 (EEVNWGPEGQWLTDRRHSGDRKL) form a disordered region. Over residues 203–213 (TDRRHSGDRKL) the composition is skewed to basic and acidic residues. The tryptophyl-tyrosyl-methioninium (Tyr-Met) (with W-104) cross-link spans 226 to 252 (YVNPEGPHGNPDPIAAAHDIRQAFGRM). Residue His267 coordinates heme b.

It belongs to the peroxidase family. Peroxidase/catalase subfamily. In terms of assembly, homodimer or homotetramer. It depends on heme b as a cofactor. Post-translationally, formation of the three residue Trp-Tyr-Met cross-link is important for the catalase, but not the peroxidase activity of the enzyme.

It carries out the reaction H2O2 + AH2 = A + 2 H2O. The catalysed reaction is 2 H2O2 = O2 + 2 H2O. In terms of biological role, bifunctional enzyme with both catalase and broad-spectrum peroxidase activity. The chain is Catalase-peroxidase from Saccharophagus degradans (strain 2-40 / ATCC 43961 / DSM 17024).